Consider the following 73-residue polypeptide: Conotoxin Cl9.2 (73 aa).

Positions Met-1–Ala-18 are cleaved as a signal peptide. Residues Glu-19–Thr-41 constitute a propeptide that is removed on maturation. 3 cysteine pairs are disulfide-bonded: Cys-46-Cys-61, Cys-52-Cys-63, and Cys-58-Cys-72.

As to expression, expressed by the venom duct.

Its subcellular location is the secreted. The polypeptide is Conotoxin Cl9.2 (Californiconus californicus (California cone)).